Here is a 354-residue protein sequence, read N- to C-terminus: Ferrochelatase (354 aa).

Fe cation is bound by residues His-214 and Glu-295.

The protein belongs to the ferrochelatase family.

It localises to the cytoplasm. The catalysed reaction is heme b + 2 H(+) = protoporphyrin IX + Fe(2+). It participates in porphyrin-containing compound metabolism; protoheme biosynthesis; protoheme from protoporphyrin-IX: step 1/1. Catalyzes the ferrous insertion into protoporphyrin IX. The polypeptide is Ferrochelatase (Burkholderia cenocepacia (strain HI2424)).